Consider the following 110-residue polypeptide: Small ribosomal subunit protein mS33 (110 aa).

Over residues 84-95 (KRRGKGAPKKMK) the composition is skewed to basic residues. Residues 84–110 (KRRGKGAPKKMKKDAAATAKGKGKKKK) are disordered.

The protein belongs to the mitochondrion-specific ribosomal protein mS33 family. As to quaternary structure, component of the mitochondrial small ribosomal subunit (mt-SSU). Mature yeast 74S mitochondrial ribosomes consist of a small (37S) and a large (54S) subunit. The 37S small subunit contains a 15S ribosomal RNA (15S mt-rRNA) and 34 different proteins. The 54S large subunit contains a 21S rRNA (21S mt-rRNA) and 46 different proteins.

It localises to the mitochondrion. In terms of biological role, component of the mitochondrial ribosome (mitoribosome), a dedicated translation machinery responsible for the synthesis of mitochondrial genome-encoded proteins, including at least some of the essential transmembrane subunits of the mitochondrial respiratory chain. The mitoribosomes are attached to the mitochondrial inner membrane and translation products are cotranslationally integrated into the membrane. This Saccharomyces cerevisiae (strain ATCC 204508 / S288c) (Baker's yeast) protein is Small ribosomal subunit protein mS33 (RSM27).